A 213-amino-acid polypeptide reads, in one-letter code: Putative amidate substrates transporter protein (213 aa).

The next 6 helical transmembrane spans lie at 4–20, 32–48, 56–72, 116–132, 146–162, and 172–188; these read VGLF…GLML, LNFF…TVLI, AVIF…FTYL, VIWL…FLLL, VAVA…AFLI, and LPAA…VVLA.

It belongs to the AmiS/UreI family.

The protein resides in the cell membrane. Possible transporter that might be responsible for the adsorption of amidase substrates or release of their hydrolysis products. The sequence is that of Putative amidate substrates transporter protein from Mycolicibacterium smegmatis (Mycobacterium smegmatis).